Here is a 92-residue protein sequence, read N- to C-terminus: UPF0250 protein Avin_08440 (92 aa).

It belongs to the UPF0250 family.

The protein is UPF0250 protein Avin_08440 of Azotobacter vinelandii (strain DJ / ATCC BAA-1303).